The chain runs to 125 residues: uncharacterized protein (125 aa).

Residues 14-112 (CPVEFTLDVI…WGESNRDVLE (99 aa)) enclose the HTH hxlR-type domain.

This is an uncharacterized protein from Bacillus subtilis (strain 168).